Reading from the N-terminus, the 357-residue chain is Peptide chain release factor 1 (357 aa).

Q234 is modified (N5-methylglutamine). Residues 284-307 (KKQEQRSNDRKQQVGSGDRSERIR) show a composition bias toward basic and acidic residues. A disordered region spans residues 284–313 (KKQEQRSNDRKQQVGSGDRSERIRTYNFPQ).

It belongs to the prokaryotic/mitochondrial release factor family. Methylated by PrmC. Methylation increases the termination efficiency of RF1.

Its subcellular location is the cytoplasm. Its function is as follows. Peptide chain release factor 1 directs the termination of translation in response to the peptide chain termination codons UAG and UAA. This chain is Peptide chain release factor 1, found in Borrelia turicatae (strain 91E135).